The primary structure comprises 453 residues: Pup--protein ligase (453 aa).

Glu9 provides a ligand contact to Mg(2+). Arg53 provides a ligand contact to ATP. Position 55 (Tyr55) interacts with Mg(2+). Asp57 serves as the catalytic Proton acceptor. Glu63 contributes to the Mg(2+) binding site. ATP-binding residues include Thr66 and Trp420.

Belongs to the Pup ligase/Pup deamidase family. Pup-conjugating enzyme subfamily.

The catalysed reaction is ATP + [prokaryotic ubiquitin-like protein]-L-glutamate + [protein]-L-lysine = ADP + phosphate + N(6)-([prokaryotic ubiquitin-like protein]-gamma-L-glutamyl)-[protein]-L-lysine.. It participates in protein degradation; proteasomal Pup-dependent pathway. The protein operates within protein modification; protein pupylation. Its function is as follows. Catalyzes the covalent attachment of the prokaryotic ubiquitin-like protein modifier Pup to the proteasomal substrate proteins, thereby targeting them for proteasomal degradation. This tagging system is termed pupylation. The ligation reaction involves the side-chain carboxylate of the C-terminal glutamate of Pup and the side-chain amino group of a substrate lysine. This Streptomyces coelicolor (strain ATCC BAA-471 / A3(2) / M145) protein is Pup--protein ligase.